The primary structure comprises 469 residues: UDP-N-acetylmuramoylalanine--D-glutamate ligase (469 aa).

123–129 is a binding site for ATP; the sequence is GTNGKST.

Belongs to the MurCDEF family.

The protein localises to the cytoplasm. The enzyme catalyses UDP-N-acetyl-alpha-D-muramoyl-L-alanine + D-glutamate + ATP = UDP-N-acetyl-alpha-D-muramoyl-L-alanyl-D-glutamate + ADP + phosphate + H(+). Its pathway is cell wall biogenesis; peptidoglycan biosynthesis. Cell wall formation. Catalyzes the addition of glutamate to the nucleotide precursor UDP-N-acetylmuramoyl-L-alanine (UMA). This chain is UDP-N-acetylmuramoylalanine--D-glutamate ligase, found in Phenylobacterium zucineum (strain HLK1).